We begin with the raw amino-acid sequence, 63 residues long: Light-harvesting protein B-800/850 alpha chain (63 aa).

Topologically, residues 1–14 (MNNAKMWLVVKPTV) are cytoplasmic. The helical transmembrane segment at 15 to 35 (GIPLFLVACAIASFLVHLMLV) threads the bilayer. His31 lines the a bacteriochlorophyll pocket. Residues 36–63 (LTTGWMGDYYSGSFEAASLVSNATTLLS) are Periplasmic-facing.

The protein belongs to the antenna complex alpha subunit family. The core complex is formed by different alpha and beta chains, binding bacteriochlorophyll molecules, and arranged most probably in tetrameric structures disposed around the reaction center. The non-pigmented gamma chains may constitute additional components.

The protein localises to the cell inner membrane. Antenna complexes are light-harvesting systems, which transfer the excitation energy to the reaction centers. The polypeptide is Light-harvesting protein B-800/850 alpha chain (pucA) (Rhodovulum sulfidophilum (Rhodobacter sulfidophilus)).